Here is a 450-residue protein sequence, read N- to C-terminus: Keratin, type I cytoskeletal 25 (450 aa).

A disordered region spans residues 1 to 24 (MSLRLPSGSRRASPRPTTGSLRLS). The tract at residues 1–78 (MSLRLPSGSR…MNEGGLLSGN (78 aa)) is head. The segment at 79-114 (EKVTMQNLNDRLASYLENVRALEEANADLEQKIKGW) is coil 1A. An IF rod domain is found at 79–394 (EKVTMQNLND…LLIGGDDGAC (316 aa)). Residues 115 to 136 (YEKFGPGSCRGLDHDYSRYFPI) are linker 1. The tract at residues 137 to 228 (IEDLKNQIIA…KNHKEEMQVL (92 aa)) is coil 1B. The tract at residues 229–251 (QCAAGGNVNVEMNAAPGVDLTVL) is linker 12. The interval 252-390 (LNNMRAEYEA…ETYCLLIGGD (139 aa)) is coil 2. The segment at 391-450 (DGACKSGGYKSKDYAAGNMGNQMKDPIKAIVVKKVLEEVDQRSKILTTRLHSLEEKSQSN) is tail. Ser-442 carries the post-translational modification Phosphoserine.

This sequence belongs to the intermediate filament family. In terms of assembly, heterodimer of a type I and a type II keratin. Heterodimer with type II keratin KRT5 leading to the formation of keratin intermediate filament (KIF) network. Interacts with KRT6A to form filaments.

It localises to the cytoplasm. Essential for the proper assembly of type I and type II keratin protein complexes and formation of keratin intermediate filaments in the inner root sheath (irs). Plays a role in the cytoskeleton organization. The protein is Keratin, type I cytoskeletal 25 of Capra hircus (Goat).